We begin with the raw amino-acid sequence, 213 residues long: Glutathione S-transferase DHAR1, mitochondrial (213 aa).

Residues K8 and D19 each coordinate glutathione. Positions 8 and 19 each coordinate L-ascorbate. One can recognise a GST N-terminal domain in the interval 10-83; that stretch reads AVGAPDHLGD…DVIVGILEEK (74 aa). C20 (nucleophile) is an active-site residue. C20 carries the post-translational modification S-glutathionyl cysteine. The Glutathione-binding signature appears at 20–25; it reads CPFSQR. Glutathione is bound by residues K47, V60, and S73. A GST C-terminal domain is found at 84 to 213; the sequence is YPDPPLKTPA…ISGWAPKVNP (130 aa). The short motif at 133-137 is the Copper-binding element; sequence HLKSH. Glutathione-binding residues include H160 and W207. Residue K210 coordinates L-ascorbate.

The protein belongs to the GST superfamily. DHAR family. As to quaternary structure, monomer. Interacts with copper (Cu). Post-translationally, spontaneous S-glutathionylation in the presence of oxidized glutathione (GSSG). Expressed at least in roots and leaves.

The protein resides in the mitochondrion. It is found in the cytoplasm. It localises to the cytosol. Its subcellular location is the peroxisome. The protein localises to the membrane. It catalyses the reaction RX + glutathione = an S-substituted glutathione + a halide anion + H(+). The enzyme catalyses L-dehydroascorbate + 2 glutathione = glutathione disulfide + L-ascorbate. Displays a dual function. As a soluble protein, exhibits glutathione-dependent thiol transferase and dehydroascorbate (DHA) reductase activities. Key component of the ascorbate recycling system. Involved in the redox homeostasis, especially in scavenging of ROS under oxidative stresses, subsequently to biotic or abiotic inducers. As a peripheral membrane protein, could also function as voltage-gated ion channel. The polypeptide is Glutathione S-transferase DHAR1, mitochondrial (Arabidopsis thaliana (Mouse-ear cress)).